Consider the following 161-residue polypeptide: N5-carboxyaminoimidazole ribonucleotide mutase (161 aa).

Substrate is bound by residues Ser9, Asp12, and Arg39.

Belongs to the AIR carboxylase family. Class I subfamily.

It catalyses the reaction 5-carboxyamino-1-(5-phospho-D-ribosyl)imidazole + H(+) = 5-amino-1-(5-phospho-D-ribosyl)imidazole-4-carboxylate. It participates in purine metabolism; IMP biosynthesis via de novo pathway; 5-amino-1-(5-phospho-D-ribosyl)imidazole-4-carboxylate from 5-amino-1-(5-phospho-D-ribosyl)imidazole (N5-CAIR route): step 2/2. Catalyzes the conversion of N5-carboxyaminoimidazole ribonucleotide (N5-CAIR) to 4-carboxy-5-aminoimidazole ribonucleotide (CAIR). In Vibrio parahaemolyticus serotype O3:K6 (strain RIMD 2210633), this protein is N5-carboxyaminoimidazole ribonucleotide mutase.